Here is a 400-residue protein sequence, read N- to C-terminus: NADH-quinone oxidoreductase subunit D (400 aa).

It belongs to the complex I 49 kDa subunit family. NDH-1 is composed of 14 different subunits. Subunits NuoB, C, D, E, F, and G constitute the peripheral sector of the complex.

The protein resides in the cell inner membrane. The enzyme catalyses a quinone + NADH + 5 H(+)(in) = a quinol + NAD(+) + 4 H(+)(out). NDH-1 shuttles electrons from NADH, via FMN and iron-sulfur (Fe-S) centers, to quinones in the respiratory chain. The immediate electron acceptor for the enzyme in this species is believed to be a menaquinone. Couples the redox reaction to proton translocation (for every two electrons transferred, four hydrogen ions are translocated across the cytoplasmic membrane), and thus conserves the redox energy in a proton gradient. In Chlorobium chlorochromatii (strain CaD3), this protein is NADH-quinone oxidoreductase subunit D.